The following is a 227-amino-acid chain: N-acetyltransferase 8B (227 aa).

Topologically, residues 1-42 are cytoplasmic; sequence MAPYHIRKYQESDRKSVVGLLSGGMAEHAPATFRRLLKLPRT. Residues 43–63 form a helical; Signal-anchor for type II membrane protein membrane-spanning segment; it reads LILLLGGALALLLVSGSWILA. Positions 61–214 constitute an N-acetyltransferase domain; the sequence is ILALVFSLSL…ARLVDLHTVH (154 aa). The Lumenal segment spans residues 64–227; it reads LVFSLSLLPA…HLPSAQAGRL (164 aa). N6-acetyllysine is present on Lys-99.

This sequence belongs to the NAT8 family. Acetylation on Lys-99 modulates enzymatic activity.

Its subcellular location is the endoplasmic reticulum-Golgi intermediate compartment membrane. The protein resides in the endoplasmic reticulum membrane. It carries out the reaction L-lysyl-[protein] + acetyl-CoA = N(6)-acetyl-L-lysyl-[protein] + CoA + H(+). Allosterically regulated by acetylation at residue Lys-99. Its function is as follows. Endoplasmic reticulum (ER)-membrane-bound lysine N-acetyltransferase catalyzing the N6-acetylation of lysine residues in the lumen of the ER in various proteins, including PROM1 and BACE1, using acetyl-CoA as acetyl donor. Thereby, may regulate apoptosis through the acetylation and the regulation of the expression of PROM1. Acetylates and stabilizes BACE1 immature protein, leading to increased steady-state levels in neurons. By acting on BACE1 expression, may regulate amyloid beta-peptide formation. N(6)-lysine acetylation in ER maintains protein homeostasis and regulates reticulophagy. The sequence is that of N-acetyltransferase 8B from Homo sapiens (Human).